A 159-amino-acid chain; its full sequence is Phosphopantetheine adenylyltransferase (159 aa).

Threonine 9 provides a ligand contact to substrate. Residues 9–10 (TF) and histidine 17 each bind ATP. 3 residues coordinate substrate: lysine 41, leucine 73, and arginine 87. Residues 88–90 (GLR), glutamate 98, and 123–129 (YSFISST) contribute to the ATP site.

Belongs to the bacterial CoaD family. As to quaternary structure, homohexamer. The cofactor is Mg(2+).

The protein resides in the cytoplasm. The enzyme catalyses (R)-4'-phosphopantetheine + ATP + H(+) = 3'-dephospho-CoA + diphosphate. Its pathway is cofactor biosynthesis; coenzyme A biosynthesis; CoA from (R)-pantothenate: step 4/5. In terms of biological role, reversibly transfers an adenylyl group from ATP to 4'-phosphopantetheine, yielding dephospho-CoA (dPCoA) and pyrophosphate. This chain is Phosphopantetheine adenylyltransferase, found in Pseudomonas aeruginosa (strain LESB58).